A 333-amino-acid polypeptide reads, in one-letter code: Lipoyl synthase (333 aa).

The disordered stretch occupies residues 1 to 29 (MTDSAAGATEVATPATPSNKPYDATAKQK). Residues cysteine 80, cysteine 85, cysteine 91, cysteine 106, cysteine 110, cysteine 113, and serine 320 each coordinate [4Fe-4S] cluster. Residues 91 to 309 (CFGKGTATFM…EEKAYEMGFT (219 aa)) enclose the Radical SAM core domain.

It belongs to the radical SAM superfamily. Lipoyl synthase family. The cofactor is [4Fe-4S] cluster.

It is found in the cytoplasm. The catalysed reaction is [[Fe-S] cluster scaffold protein carrying a second [4Fe-4S](2+) cluster] + N(6)-octanoyl-L-lysyl-[protein] + 2 oxidized [2Fe-2S]-[ferredoxin] + 2 S-adenosyl-L-methionine + 4 H(+) = [[Fe-S] cluster scaffold protein] + N(6)-[(R)-dihydrolipoyl]-L-lysyl-[protein] + 4 Fe(3+) + 2 hydrogen sulfide + 2 5'-deoxyadenosine + 2 L-methionine + 2 reduced [2Fe-2S]-[ferredoxin]. The protein operates within protein modification; protein lipoylation via endogenous pathway; protein N(6)-(lipoyl)lysine from octanoyl-[acyl-carrier-protein]: step 2/2. Catalyzes the radical-mediated insertion of two sulfur atoms into the C-6 and C-8 positions of the octanoyl moiety bound to the lipoyl domains of lipoate-dependent enzymes, thereby converting the octanoylated domains into lipoylated derivatives. This is Lipoyl synthase from Ralstonia pickettii (strain 12J).